Here is a 210-residue protein sequence, read N- to C-terminus: Large ribosomal subunit protein uL4 (210 aa).

The segment at 41-79 (MANARQGTASTKTRAEVRGGGRKPWRQKGTGRARAGSNR) is disordered. Polar residues predominate over residues 43-52 (NARQGTASTK). Residues 60-71 (GGRKPWRQKGTG) are compositionally biased toward basic residues.

Belongs to the universal ribosomal protein uL4 family. In terms of assembly, part of the 50S ribosomal subunit.

One of the primary rRNA binding proteins, this protein initially binds near the 5'-end of the 23S rRNA. It is important during the early stages of 50S assembly. It makes multiple contacts with different domains of the 23S rRNA in the assembled 50S subunit and ribosome. In terms of biological role, forms part of the polypeptide exit tunnel. The chain is Large ribosomal subunit protein uL4 from Cyanothece sp. (strain PCC 7425 / ATCC 29141).